Here is a 233-residue protein sequence, read N- to C-terminus: 7-cyano-7-deazaguanine synthase (233 aa).

8-18 (FSGGQDSTTCL) contributes to the ATP binding site. Residues C188, C197, C200, and C203 each contribute to the Zn(2+) site.

It belongs to the QueC family. Zn(2+) is required as a cofactor.

The enzyme catalyses 7-carboxy-7-deazaguanine + NH4(+) + ATP = 7-cyano-7-deazaguanine + ADP + phosphate + H2O + H(+). It functions in the pathway purine metabolism; 7-cyano-7-deazaguanine biosynthesis. Its function is as follows. Catalyzes the ATP-dependent conversion of 7-carboxy-7-deazaguanine (CDG) to 7-cyano-7-deazaguanine (preQ(0)). This chain is 7-cyano-7-deazaguanine synthase, found in Klebsiella pneumoniae (strain 342).